Consider the following 480-residue polypeptide: MNFETVIGLEVHVELNTNSKIFSPTSAHFGNDQNANTNVIDWSFPGVLPVLNKGVVDAGIKAALALNMDLHKKMHFDRKNYFYPDNPKAYQISQFDEPIGYNGWIEIELEDGTTKKIGIERAHLEEDAGKNTHGTDGYSYVDLNRQGVPLIEIVSEADMRSPEEAYAYLTALKEVIQYAGISDVKMEEGSMRVDANISLRPYGQEKFGTKTELKNLNSFSNVRKGLEYEVQRQAEILRSGGQIRQETRRYDEANKTTILMRVKEGAADYRYFPEPDLPLFEISDEWIEEMRTELPEFPKERRARYVSDLGLSDYDASQLTANKVTSDFFEKAVALGGDAKQVSNWLQGEVAQFLNAEGKTLEQIELTPENLVEMITIIEDGTISSKIAKKVFVHLAKNGGGAREYVEKAGMVQISDPAILIPIIHQVFADNEAAVADFKSGKRNADKAFTGFLMKATKGQANPQVALKLLAQELAKLKEN.

It belongs to the GatB/GatE family. GatB subfamily. Heterotrimer of A, B and C subunits.

It catalyses the reaction L-glutamyl-tRNA(Gln) + L-glutamine + ATP + H2O = L-glutaminyl-tRNA(Gln) + L-glutamate + ADP + phosphate + H(+). It carries out the reaction L-aspartyl-tRNA(Asn) + L-glutamine + ATP + H2O = L-asparaginyl-tRNA(Asn) + L-glutamate + ADP + phosphate + 2 H(+). Its function is as follows. Allows the formation of correctly charged Asn-tRNA(Asn) or Gln-tRNA(Gln) through the transamidation of misacylated Asp-tRNA(Asn) or Glu-tRNA(Gln) in organisms which lack either or both of asparaginyl-tRNA or glutaminyl-tRNA synthetases. The reaction takes place in the presence of glutamine and ATP through an activated phospho-Asp-tRNA(Asn) or phospho-Glu-tRNA(Gln). The protein is Aspartyl/glutamyl-tRNA(Asn/Gln) amidotransferase subunit B of Streptococcus pneumoniae (strain 70585).